We begin with the raw amino-acid sequence, 145 residues long: D-aminoacyl-tRNA deacylase (145 aa).

Positions 137 to 138 match the Gly-cisPro motif, important for rejection of L-amino acids motif; sequence GP.

This sequence belongs to the DTD family. In terms of assembly, homodimer.

It localises to the cytoplasm. It carries out the reaction glycyl-tRNA(Ala) + H2O = tRNA(Ala) + glycine + H(+). It catalyses the reaction a D-aminoacyl-tRNA + H2O = a tRNA + a D-alpha-amino acid + H(+). Its function is as follows. An aminoacyl-tRNA editing enzyme that deacylates mischarged D-aminoacyl-tRNAs. Also deacylates mischarged glycyl-tRNA(Ala), protecting cells against glycine mischarging by AlaRS. Acts via tRNA-based rather than protein-based catalysis; rejects L-amino acids rather than detecting D-amino acids in the active site. By recycling D-aminoacyl-tRNA to D-amino acids and free tRNA molecules, this enzyme counteracts the toxicity associated with the formation of D-aminoacyl-tRNA entities in vivo and helps enforce protein L-homochirality. The polypeptide is D-aminoacyl-tRNA deacylase (Deinococcus radiodurans (strain ATCC 13939 / DSM 20539 / JCM 16871 / CCUG 27074 / LMG 4051 / NBRC 15346 / NCIMB 9279 / VKM B-1422 / R1)).